A 238-amino-acid polypeptide reads, in one-letter code: Ribonuclease PH (238 aa).

Residues Arg86 and 124-126 (GTR) contribute to the phosphate site.

It belongs to the RNase PH family. Homohexameric ring arranged as a trimer of dimers.

It carries out the reaction tRNA(n+1) + phosphate = tRNA(n) + a ribonucleoside 5'-diphosphate. Its function is as follows. Phosphorolytic 3'-5' exoribonuclease that plays an important role in tRNA 3'-end maturation. Removes nucleotide residues following the 3'-CCA terminus of tRNAs; can also add nucleotides to the ends of RNA molecules by using nucleoside diphosphates as substrates, but this may not be physiologically important. Probably plays a role in initiation of 16S rRNA degradation (leading to ribosome degradation) during starvation. This chain is Ribonuclease PH, found in Salmonella choleraesuis (strain SC-B67).